Here is a 379-residue protein sequence, read N- to C-terminus: UDP-4-amino-4-deoxy-L-arabinose--oxoglutarate aminotransferase (379 aa).

The residue at position 182 (Lys-182) is an N6-(pyridoxal phosphate)lysine.

The protein belongs to the DegT/DnrJ/EryC1 family. ArnB subfamily. In terms of assembly, homodimer. It depends on pyridoxal 5'-phosphate as a cofactor.

The enzyme catalyses UDP-4-amino-4-deoxy-beta-L-arabinose + 2-oxoglutarate = UDP-beta-L-threo-pentopyranos-4-ulose + L-glutamate. It functions in the pathway nucleotide-sugar biosynthesis; UDP-4-deoxy-4-formamido-beta-L-arabinose biosynthesis; UDP-4-deoxy-4-formamido-beta-L-arabinose from UDP-alpha-D-glucuronate: step 2/3. It participates in bacterial outer membrane biogenesis; lipopolysaccharide biosynthesis. Its function is as follows. Catalyzes the conversion of UDP-4-keto-arabinose (UDP-Ara4O) to UDP-4-amino-4-deoxy-L-arabinose (UDP-L-Ara4N). The modified arabinose is attached to lipid A and is required for resistance to polymyxin and cationic antimicrobial peptides. This chain is UDP-4-amino-4-deoxy-L-arabinose--oxoglutarate aminotransferase, found in Shigella sonnei (strain Ss046).